The following is a 259-amino-acid chain: MFLALDIGNTNITVGLFAMKDKKVLPEPLKVWIMSTVKERTFDEYATLLMNMLFYDGFDAKQLSNFAVASVVPSLNAVFEELIKKYFGEKTFFVNSKNCGGLVFAAGNSKETGADRIANVVAAYSVYGDSCIVIDFGTATTFDCINSEGIYIGGAIAPGPSISARLLNLKTEQLPRVEVKKPLKSIGLTTVECMQSGLYFGYTGLVKELIARIKNEMKIKHIIATGGLAGLMFDEIEEIEIILPYLTLSGVRIVWEKVI.

6–13 (DIGNTNIT) is an ATP binding site. A substrate-binding site is contributed by 113–116 (GADR). D115 functions as the Proton acceptor in the catalytic mechanism. D135 is a binding site for K(+). T138 is an ATP binding site. Residue T190 participates in substrate binding.

Belongs to the type III pantothenate kinase family. In terms of assembly, homodimer. The cofactor is NH4(+). It depends on K(+) as a cofactor.

The protein resides in the cytoplasm. It carries out the reaction (R)-pantothenate + ATP = (R)-4'-phosphopantothenate + ADP + H(+). The protein operates within cofactor biosynthesis; coenzyme A biosynthesis; CoA from (R)-pantothenate: step 1/5. Its function is as follows. Catalyzes the phosphorylation of pantothenate (Pan), the first step in CoA biosynthesis. This is Type III pantothenate kinase from Endomicrobium trichonymphae.